The chain runs to 234 residues: NAD-dependent protein deacylase (234 aa).

Positions M1–L234 constitute a Deacetylase sirtuin-type domain. NAD(+) is bound at residue G12 to W31. Substrate contacts are provided by Y56 and R59. Q93–D96 lines the NAD(+) pocket. Catalysis depends on H111, which acts as the Proton acceptor. C119 and C138 together coordinate Zn(2+). NAD(+) is bound by residues G178 to S180, N204 to E206, and A222.

It belongs to the sirtuin family. Class III subfamily. The cofactor is Zn(2+).

It localises to the cytoplasm. The enzyme catalyses N(6)-acetyl-L-lysyl-[protein] + NAD(+) + H2O = 2''-O-acetyl-ADP-D-ribose + nicotinamide + L-lysyl-[protein]. It carries out the reaction N(6)-succinyl-L-lysyl-[protein] + NAD(+) + H2O = 2''-O-succinyl-ADP-D-ribose + nicotinamide + L-lysyl-[protein]. In terms of biological role, NAD-dependent lysine deacetylase and desuccinylase that specifically removes acetyl and succinyl groups on target proteins. Modulates the activities of several proteins which are inactive in their acylated form. This is NAD-dependent protein deacylase from Pasteurella multocida (strain Pm70).